Consider the following 122-residue polypeptide: Large ribosomal subunit protein bL12 (122 aa).

The protein belongs to the bacterial ribosomal protein bL12 family. As to quaternary structure, homodimer. Part of the ribosomal stalk of the 50S ribosomal subunit. Forms a multimeric L10(L12)X complex, where L10 forms an elongated spine to which 2 to 4 L12 dimers bind in a sequential fashion. Binds GTP-bound translation factors.

In terms of biological role, forms part of the ribosomal stalk which helps the ribosome interact with GTP-bound translation factors. Is thus essential for accurate translation. The sequence is that of Large ribosomal subunit protein bL12 from Azotobacter vinelandii (strain DJ / ATCC BAA-1303).